The sequence spans 446 residues: Glutamate-1-semialdehyde 2,1-aminomutase (446 aa).

Lys278 bears the N6-(pyridoxal phosphate)lysine mark.

This sequence belongs to the class-III pyridoxal-phosphate-dependent aminotransferase family. HemL subfamily. In terms of assembly, homodimer. Pyridoxal 5'-phosphate is required as a cofactor.

Its subcellular location is the cytoplasm. It catalyses the reaction (S)-4-amino-5-oxopentanoate = 5-aminolevulinate. It functions in the pathway porphyrin-containing compound metabolism; protoporphyrin-IX biosynthesis; 5-aminolevulinate from L-glutamyl-tRNA(Glu): step 2/2. The sequence is that of Glutamate-1-semialdehyde 2,1-aminomutase from Deinococcus geothermalis (strain DSM 11300 / CIP 105573 / AG-3a).